We begin with the raw amino-acid sequence, 829 residues long: Probable receptor-like protein kinase At5g59700 (829 aa).

Positions Met1–Gly24 are cleaved as a signal peptide. Topologically, residues Tyr25–Met406 are extracellular. Asn40, Asn216, Asn279, and Asn380 each carry an N-linked (GlcNAc...) asparagine glycan. A helical membrane pass occupies residues Ile407–Leu427. Residues Tyr428 to Arg829 lie on the Cytoplasmic side of the membrane. The region spanning Phe482–Ala755 is the Protein kinase domain. Residues Ile488–Val496 and Lys510 each bind ATP. Residue Asp606 is the Proton acceptor of the active site.

This sequence belongs to the protein kinase superfamily. Ser/Thr protein kinase family.

It localises to the cell membrane. The protein is Probable receptor-like protein kinase At5g59700 of Arabidopsis thaliana (Mouse-ear cress).